A 205-amino-acid chain; its full sequence is uncharacterized protein (205 aa).

The N-terminal stretch at 1 to 18 is a signal peptide; the sequence is MKASLALLSLLTAFTSHS.

This is an uncharacterized protein from Escherichia coli (strain K12).